The sequence spans 342 residues: (+)-pulegone reductase (342 aa).

Residues 163–166 (GSVG), Lys189, Tyr205, Asn229, 251–257 (CGMVSQY), 281–283 (FVV), and Asn331 each bind NADP(+).

Belongs to the NADP-dependent oxidoreductase L4BD family.

It localises to the cytoplasm. The enzyme catalyses (2R,5R)-isomenthone + NADP(+) = (R)-pulegone + NADPH + H(+). It catalyses the reaction (1R,4S)-menthone + NADP(+) = (R)-pulegone + NADPH + H(+). The protein operates within secondary metabolite biosynthesis; terpenoid biosynthesis. Its activity is regulated as follows. Not inhibited by (+)-menthofuran. Monoterpene synthase that catalyzes the specific reduction of the 4,8-double bond of (+)-pulegone to produce both (-)-menthone and (+)-isomenthone in a 70:30 ratio. Unable to utilize either (-)-isopiperitenone or (+)-cis-isopulegone, or to catalyze the reverse reaction with (-)-menthone or (+)-isomenthone. Has an absolute requirement for NADPH. The sequence is that of (+)-pulegone reductase from Mentha piperita (Peppermint).